We begin with the raw amino-acid sequence, 79 residues long: Small ribosomal subunit protein bS16 (79 aa).

The protein belongs to the bacterial ribosomal protein bS16 family.

This is Small ribosomal subunit protein bS16 from Nitratidesulfovibrio vulgaris (strain DSM 19637 / Miyazaki F) (Desulfovibrio vulgaris).